Here is a 166-residue protein sequence, read N- to C-terminus: MSENEQFSQMEAKARARMKERGVEVSDIAELVFFLQKKYHPDLTIDECTLNVNRVLAKREVQNAILTGIELDVLAEQKKLSEPLQTMLEIDESLYGVDEVLAFSIVNIYGSIGFTNYGYIDKEKPGILKRLNDKSTGECHTFLDDIVGAISAAASSRLAHRARHTE.

The protein to B.subtilis YpjQ.

This is an uncharacterized protein from Bacillus subtilis (strain 168).